Consider the following 481-residue polypeptide: UDP-N-acetylmuramoylalanine--D-glutamate ligase (481 aa).

108–114 (GTNGKTS) contributes to the ATP binding site.

The protein belongs to the MurCDEF family.

It is found in the cytoplasm. It carries out the reaction UDP-N-acetyl-alpha-D-muramoyl-L-alanine + D-glutamate + ATP = UDP-N-acetyl-alpha-D-muramoyl-L-alanyl-D-glutamate + ADP + phosphate + H(+). It participates in cell wall biogenesis; peptidoglycan biosynthesis. Cell wall formation. Catalyzes the addition of glutamate to the nucleotide precursor UDP-N-acetylmuramoyl-L-alanine (UMA). This is UDP-N-acetylmuramoylalanine--D-glutamate ligase from Bifidobacterium longum (strain DJO10A).